A 418-amino-acid chain; its full sequence is Histidine--tRNA ligase (418 aa).

It belongs to the class-II aminoacyl-tRNA synthetase family.

It is found in the cytoplasm. The enzyme catalyses tRNA(His) + L-histidine + ATP = L-histidyl-tRNA(His) + AMP + diphosphate + H(+). The chain is Histidine--tRNA ligase from Methanococcus aeolicus (strain ATCC BAA-1280 / DSM 17508 / OCM 812 / Nankai-3).